Reading from the N-terminus, the 139-residue chain is ATP synthase epsilon chain (139 aa).

The protein belongs to the ATPase epsilon chain family. F-type ATPases have 2 components, CF(1) - the catalytic core - and CF(0) - the membrane proton channel. CF(1) has five subunits: alpha(3), beta(3), gamma(1), delta(1), epsilon(1). CF(0) has three main subunits: a, b and c.

The protein resides in the cell inner membrane. Its function is as follows. Produces ATP from ADP in the presence of a proton gradient across the membrane. This chain is ATP synthase epsilon chain, found in Pseudomonas putida (strain GB-1).